The sequence spans 340 residues: 4-dimethylallyltryptophan N-methyltransferase easF (340 aa).

The protein belongs to the methyltransferase superfamily. In terms of assembly, homodimer.

It catalyses the reaction 4-(3-methylbut-2-enyl)-L-tryptophan + S-adenosyl-L-methionine = 4-(3-methylbut-2-enyl)-L-abrine + S-adenosyl-L-homocysteine + H(+). It functions in the pathway alkaloid biosynthesis; ergot alkaloid biosynthesis. Functionally, 4-dimethylallyltryptophan N-methyltransferase; part of the gene cluster that mediates the biosynthesis of fungal ergot alkaloid. DmaW catalyzes the first step of ergot alkaloid biosynthesis by condensing dimethylallyl diphosphate (DMAP) and tryptophan to form 4-dimethylallyl-L-tryptophan. The second step is catalyzed by the methyltransferase easF that methylates 4-dimethylallyl-L-tryptophan in the presence of S-adenosyl-L-methionine, resulting in the formation of 4-dimethylallyl-L-abrine. The catalase easC and the FAD-dependent oxidoreductase easE then transform 4-dimethylallyl-L-abrine to chanoclavine-I which is further oxidized by easD in the presence of NAD(+), resulting in the formation of chanoclavine-I aldehyde. Chanoclavine-I aldehyde is the precursor of ergoamides and ergopeptines in Clavicipitaceae, and clavine-type alcaloids such as fumiclavine in Trichocomaceae. However, the metabolites downstream of chanoclavine-I aldehyde in Arthrodermataceae have not been identified yet. This is 4-dimethylallyltryptophan N-methyltransferase easF from Trichophyton verrucosum (strain HKI 0517).